Here is a 766-residue protein sequence, read N- to C-terminus: Protein zer-1 homolog (766 aa).

An N-acetylalanine modification is found at Ala-2. LRR repeat units lie at residues 226-245 (SLVL…IVQL), 246-268 (HKLR…KLTR), and 278-302 (LGNL…KMEE). ARM repeat units follow at residues 427-467 (RSEQ…NFSI), 511-556 (DNDH…NITD), 558-600 (TPDN…NVAE), 602-643 (KELR…HIMF), and 714-756 (PDKY…HCSN).

This sequence belongs to the zyg-11 family. Interacts with the ELOC-ELOB/Elongin BC complex. Part of an E3 ubiquitin ligase complex including ZER1, CUL2 and Elongin BC. As to expression, expressed in testis, spermatocytes and spermatids (at protein level). Expressed in spermatocytes, spermatids, prostate, skeletal muscle, ovary, small intestine, heart, brain and pancreas.

Serves as substrate adapter subunit in the E3 ubiquitin ligase complex ZYG11B-CUL2-Elongin BC. Acts to target substrates bearing N-terminal degrons for proteasomal degradation with the first four residues of substrates being the key recognition elements. Involved in the clearance of proteolytic fragments generated by caspase cleavage during apoptosis since N-terminal glycine degrons are strongly enriched at caspase cleavage sites. Also important in the quality control of protein N-myristoylation in which N-terminal glycine degrons are conditionally exposed after a failure of N-myristoylation. This Homo sapiens (Human) protein is Protein zer-1 homolog.